A 328-amino-acid polypeptide reads, in one-letter code: Acyl-CoA wax alcohol acyltransferase 1 (328 aa).

2 helical membrane-spanning segments follow: residues Ser-12–Leu-32 and Val-34–Phe-53.

It belongs to the diacylglycerol acyltransferase family. Predominantly expressed in skin, where it is limited to the sebaceous gland. Expressed in more mature, centrally located cells just before their rupture and sebum release. Also expressed in all tissues except spleen. Expressed at higher level in thymus, prostate and testis.

The protein resides in the endoplasmic reticulum membrane. It carries out the reaction a long chain fatty alcohol + a fatty acyl-CoA = a wax ester + CoA. The catalysed reaction is 1,2-di-(9Z-octadecenoyl)-sn-glycerol + (9Z)-octadecenoyl-CoA = 1,2,3-tri-(9Z-octadecenoyl)-glycerol + CoA. It catalyses the reaction hexadecan-1-ol + (9Z)-octadecenoyl-CoA = hexadecanyl (9Z)-octadecenoate + CoA. The enzyme catalyses decan-1-ol + (9Z)-octadecenoyl-CoA = 1-O-decyl-(9Z)-octadecenoate + CoA. It carries out the reaction (9Z)-hexadecen-1-ol + (9Z)-octadecenoyl-CoA = 1-O-(9Z)-hexadecenyl (9Z)-octadecenoate + CoA. The catalysed reaction is octadecan-1-ol + (9Z)-octadecenoyl-CoA = 1-O-octadecyl (9Z)-octadecenoate + CoA. It catalyses the reaction (9Z)-octadecen-1-ol + (9Z)-octadecenoyl-CoA = 1-O-(9Z)-octadecenyl (9Z)-octadecenoate + CoA. The enzyme catalyses hexadecan-1-ol + hexadecanoyl-CoA = hexadecanyl hexadecanoate + CoA. It carries out the reaction hexadecan-1-ol + (9Z)-hexadecenoyl-CoA = 1-O-hexadecyl (9Z)-hexadecenoate + CoA. The catalysed reaction is hexadecan-1-ol + octadecanoyl-CoA = hexadecanyl octadecanoate + CoA. It catalyses the reaction eicosan-1-ol + (9Z)-octadecenoyl-CoA = 1-O-eicosanyl (9Z)-octadecenoate + CoA. Acyltransferase that catalyzes the formation of ester bonds between fatty alcohols and fatty acyl-CoAs to form wax monoesters. Shows a strong preference for decyl alcohol (C10), with less activity towards C16 and C18 alcohols. Shows a strong preference for saturated acyl-CoAs. The chain is Acyl-CoA wax alcohol acyltransferase 1 (AWAT1) from Homo sapiens (Human).